We begin with the raw amino-acid sequence, 642 residues long: RNA polymerase sigma factor RpoD (642 aa).

The disordered stretch occupies residues 199–228; it reads HLETTAPEKPSNDNSDENEDDEESEEDADE. Positions 212–228 are enriched in acidic residues; the sequence is NSDENEDDEESEEDADE. The tract at residues 403–473 is sigma-70 factor domain-2; sequence MIQANLRLVI…TRSIADQART (71 aa). The Interaction with polymerase core subunit RpoC signature appears at 427-430; that stretch reads DLIQ. Positions 482 to 558 are sigma-70 factor domain-3; it reads ETINKMNRIS…DANNVAPADA (77 aa). The tract at residues 571-624 is sigma-70 factor domain-4; the sequence is ILESLTPREAKVLRMRFGIDMNTDHTLEEVGRQFDVTRERIRQIEAKALRKLRH. The H-T-H motif DNA-binding region spans 597-616; it reads LEEVGRQFDVTRERIRQIEA.

It belongs to the sigma-70 factor family. RpoD/SigA subfamily. Interacts transiently with the RNA polymerase catalytic core.

It localises to the cytoplasm. Functionally, sigma factors are initiation factors that promote the attachment of RNA polymerase to specific initiation sites and are then released. This sigma factor is the primary sigma factor during exponential growth. The chain is RNA polymerase sigma factor RpoD from Neisseria gonorrhoeae.